The sequence spans 118 residues: UPF0342 protein Hore_03100 (118 aa).

The protein belongs to the UPF0342 family.

The polypeptide is UPF0342 protein Hore_03100 (Halothermothrix orenii (strain H 168 / OCM 544 / DSM 9562)).